We begin with the raw amino-acid sequence, 453 residues long: Ribulose bisphosphate carboxylase large chain (453 aa).

Positions 1-2 (MS) are excised as a propeptide. Proline 3 is modified (N-acetylproline). Lysine 14 carries the post-translational modification N6,N6,N6-trimethyllysine. Residues asparagine 123 and threonine 173 each coordinate substrate. Lysine 175 (proton acceptor) is an active-site residue. Lysine 177 contributes to the substrate binding site. Residues lysine 201, aspartate 203, and glutamate 204 each coordinate Mg(2+). Lysine 201 carries the N6-carboxylysine modification. Histidine 294 serves as the catalytic Proton acceptor. Substrate contacts are provided by arginine 295, histidine 327, and serine 379.

The protein belongs to the RuBisCO large chain family. Type I subfamily. As to quaternary structure, heterohexadecamer of 8 large chains and 8 small chains; disulfide-linked. The disulfide link is formed within the large subunit homodimers. It depends on Mg(2+) as a cofactor. Post-translationally, the disulfide bond which can form in the large chain dimeric partners within the hexadecamer appears to be associated with oxidative stress and protein turnover.

Its subcellular location is the plastid. The protein resides in the chloroplast. The catalysed reaction is 2 (2R)-3-phosphoglycerate + 2 H(+) = D-ribulose 1,5-bisphosphate + CO2 + H2O. It carries out the reaction D-ribulose 1,5-bisphosphate + O2 = 2-phosphoglycolate + (2R)-3-phosphoglycerate + 2 H(+). RuBisCO catalyzes two reactions: the carboxylation of D-ribulose 1,5-bisphosphate, the primary event in carbon dioxide fixation, as well as the oxidative fragmentation of the pentose substrate in the photorespiration process. Both reactions occur simultaneously and in competition at the same active site. This Galium lucidum protein is Ribulose bisphosphate carboxylase large chain.